Consider the following 231-residue polypeptide: Probable transglycosylase SceD (231 aa).

A signal peptide spans 1-27 (MKKTLLASSLAVGLGIVAGNAGHEAHA). Residues 93–153 (SAQAPATNNV…ESKASEGSSV (61 aa)) are disordered. Positions 96–116 (APATNNVAPSADQANQVQSQE) are enriched in polar residues. A compositionally biased stretch (low complexity) spans 119–137 (APQNAQTQQPQASTSNNSQ). The span at 138–153 (VTATPTESKASEGSSV) shows a compositional bias: polar residues.

This sequence belongs to the transglycosylase family. SceD subfamily.

It is found in the secreted. Functionally, is able to cleave peptidoglycan and affects clumping and separation of bacterial cells. This is Probable transglycosylase SceD (sceD) from Staphylococcus aureus (strain bovine RF122 / ET3-1).